The primary structure comprises 38 residues: Large ribosomal subunit protein bL36 (38 aa).

This sequence belongs to the bacterial ribosomal protein bL36 family.

The sequence is that of Large ribosomal subunit protein bL36 from Roseiflexus castenholzii (strain DSM 13941 / HLO8).